Here is a 183-residue protein sequence, read N- to C-terminus: uncharacterized protein (183 aa).

An N-terminal signal peptide occupies residues 1–17 (MVLFILVLYTCIQDGNG).

This is an uncharacterized protein from Saccharomyces cerevisiae (strain ATCC 204508 / S288c) (Baker's yeast).